Consider the following 443-residue polypeptide: Chromosomal replication initiator protein DnaA (443 aa).

A domain I, interacts with DnaA modulators region spans residues 1–67; sequence MDAWSRSLER…RELLAHFAGF (67 aa). The tract at residues 67–105 is domain II; that stretch reads FSDVFLEIGSRPRPVEAQNAPVSTPSAHVSSEPQVPFAG. A domain III, AAA+ region region spans residues 106-323; that stretch reads NLDNHYTFAN…GALNTLTARA (218 aa). Glycine 151, glycine 153, lysine 154, and threonine 155 together coordinate ATP. The tract at residues 324 to 443 is domain IV, binds dsDNA; that stretch reads NFTGRAITTE…WDKLIRKLSE (120 aa).

The protein belongs to the DnaA family. In terms of assembly, oligomerizes as a right-handed, spiral filament on DNA at oriC.

It localises to the cytoplasm. Functionally, plays an essential role in the initiation and regulation of chromosomal replication. ATP-DnaA binds to the origin of replication (oriC) to initiate formation of the DNA replication initiation complex once per cell cycle. Binds the DnaA box (a 9 base pair repeat at the origin) and separates the double-stranded (ds)DNA. Forms a right-handed helical filament on oriC DNA; dsDNA binds to the exterior of the filament while single-stranded (ss)DNA is stabiized in the filament's interior. The ATP-DnaA-oriC complex binds and stabilizes one strand of the AT-rich DNA unwinding element (DUE), permitting loading of DNA polymerase. After initiation quickly degrades to an ADP-DnaA complex that is not apt for DNA replication. Binds acidic phospholipids. The chain is Chromosomal replication initiator protein DnaA from Stenotrophomonas maltophilia (strain K279a).